Reading from the N-terminus, the 637-residue chain is Neuroendocrine convertase 2 (637 aa).

The signal sequence occupies residues 1–24 (MEGGCGSQWKAAGFLFCVMVFASA). Residues 25-108 (ERPVFTNHFL…QQEGFDRKKR (84 aa)) constitute a propeptide that is removed on maturation. One can recognise a Peptidase S8 domain in the interval 128–452 (QWYLFNTGQA…YGVLDAGAMV (325 aa)). Catalysis depends on charge relay system residues Asp-166 and His-207. 2 disulfides stabilise this stretch: Cys-224/Cys-375 and Cys-316/Cys-346. A glycan (N-linked (GlcNAc...) asparagine) is linked at Asn-374. The active-site Charge relay system is Ser-383. The P/Homo B domain maps to 460 to 596 (TVPERFHCVG…TLMLHGTQSA (137 aa)). An intrachain disulfide couples Cys-467 to Cys-493. Residues Asn-513 and Asn-523 are each glycosylated (N-linked (GlcNAc...) asparagine).

The protein belongs to the peptidase S8 family. Furin subfamily.

The protein resides in the cytoplasmic vesicle. It localises to the secretory vesicle. The protein localises to the secreted. It carries out the reaction Release of protein hormones and neuropeptides from their precursors, generally by hydrolysis of -Lys-Arg-|- bonds.. Serine endopeptidase which is involved in the processing of hormone and other protein precursors at sites comprised of pairs of basic amino acid residues. Responsible for the release of glucagon from proglucagon in pancreatic A cells. The polypeptide is Neuroendocrine convertase 2 (Pcsk2) (Mus musculus (Mouse)).